We begin with the raw amino-acid sequence, 1068 residues long: MPLNKDIKKVLVIGSGPIVIGQAAEFDYSGTQACEGLKEEGVEVVLINSNPATIMTDKKVADKVYLEPLTVEFVEKVIAKERPDSLLAGMGGQTGLNLAVELYDKGILKKYGVNVIGTSIESIKEGEDRELFRNVMSRINEPVIQSEIVTDMEDGKDFANKIGYPIIVRPAYTLGGTGGGIAESEEELDEILALGLQLSSIGQVLLEKSVKGWKEIEYEVMRDSRGNCITVCNMENIDPVGIHTGDSIVVAPSQTLSDKEYQMLRSASINILNSIGIKGGCNVQFALNPNSFEYAVIEINPRVSRSSALASKATGYPIAKVASKIALGYTLDEIKNAVTEKTYACFEPSLDYVVVKIPKWPFDKFQGADRVLGTKMMATGEIMAIGSNFEAAFLKGTRSLEIGKYSLEHKKFRELSIEELKTRVISPDDERIFALAEMLRRDYRMDKVAEITGIDKFFIKKFRWIVEEEQRLRLSKIDDLDKEWLYKLKKKGFSDKGIADMLKVSPEDIYRLRNIWRINPIYKMVDTCGGEFEALSPYYYSTYDVYDEVEVSKNKKVIVIGSGPIRIGQGIEFDYASVHCVKALKKLGIETIIVNNNPETVSTDFDVSDKLYFEPLTEEDVLNIVEKEKPDGVILQFGGQTAIKLANFLKEKNIPTLGTTADQIDMAEDREKFDELLEKLKIARPKGKGIWSVEDGLEEAKKLGFPVLVRPSYVLGGQGMEITHDEKELVYYLSNAFQKDKKNPILIDKYLMGREIEVDAISDGEDVLIPGIMEHLERAGVHSGDSITMYPTQNVSKDIKEKILEYTKKLALGIGIKGMINIQFIEFQGNLYVIEVNPRASRTVPYISKVSKVPIVDIATRVMLGEKLNDLGYGVGVYKEPELISVKVPVFSTQKLPRVEVCLGPEMKSTGEVLGVGKTLDEALYKGFIGANISIKKEKGTVLATINDHDKEEFLPIAKKLHSLGYKFIATSKTAELLKEEGIEVKQVRKLKEESPNIIDTIKNDEVDLVVNTPTKGNDSKRDGFHIRRAAIERNLGVITSLDTLKAIVDIKFKEIKDETLYIFDLSN.

The carboxyphosphate synthetic domain stretch occupies residues 1-401 (MPLNKDIKKV…AFLKGTRSLE (401 aa)). Positions 129, 169, 175, 176, 208, 210, 215, 241, 242, 243, 284, and 298 each coordinate ATP. An ATP-grasp 1 domain is found at 133–327 (RNVMSRINEP…IAKVASKIAL (195 aa)). Residues Gln284, Glu298, and Asn300 each coordinate Mg(2+). Mn(2+)-binding residues include Gln284, Glu298, and Asn300. The tract at residues 402–549 (IGKYSLEHKK…YSTYDVYDEV (148 aa)) is oligomerization domain. A carbamoyl phosphate synthetic domain region spans residues 550–932 (EVSKNKKVIV…ALYKGFIGAN (383 aa)). Residues 674–864 (DELLEKLKIA…IVDIATRVML (191 aa)) form the ATP-grasp 2 domain. Arg710, Lys749, Leu751, Glu755, Gly780, Val781, His782, Ser783, Gln823, and Glu835 together coordinate ATP. Residues Gln823, Glu835, and Asn837 each coordinate Mg(2+). Residues Gln823, Glu835, and Asn837 each contribute to the Mn(2+) site. The region spanning 933 to 1068 (ISIKKEKGTV…ETLYIFDLSN (136 aa)) is the MGS-like domain. An allosteric domain region spans residues 933-1068 (ISIKKEKGTV…ETLYIFDLSN (136 aa)).

Belongs to the CarB family. Composed of two chains; the small (or glutamine) chain promotes the hydrolysis of glutamine to ammonia, which is used by the large (or ammonia) chain to synthesize carbamoyl phosphate. Tetramer of heterodimers (alpha,beta)4. Mg(2+) serves as cofactor. Mn(2+) is required as a cofactor.

It carries out the reaction hydrogencarbonate + L-glutamine + 2 ATP + H2O = carbamoyl phosphate + L-glutamate + 2 ADP + phosphate + 2 H(+). It catalyses the reaction hydrogencarbonate + NH4(+) + 2 ATP = carbamoyl phosphate + 2 ADP + phosphate + 2 H(+). It participates in amino-acid biosynthesis; L-arginine biosynthesis; carbamoyl phosphate from bicarbonate: step 1/1. The protein operates within pyrimidine metabolism; UMP biosynthesis via de novo pathway; (S)-dihydroorotate from bicarbonate: step 1/3. Large subunit of the glutamine-dependent carbamoyl phosphate synthetase (CPSase). CPSase catalyzes the formation of carbamoyl phosphate from the ammonia moiety of glutamine, carbonate, and phosphate donated by ATP, constituting the first step of 2 biosynthetic pathways, one leading to arginine and/or urea and the other to pyrimidine nucleotides. The large subunit (synthetase) binds the substrates ammonia (free or transferred from glutamine from the small subunit), hydrogencarbonate and ATP and carries out an ATP-coupled ligase reaction, activating hydrogencarbonate by forming carboxy phosphate which reacts with ammonia to form carbamoyl phosphate. The polypeptide is Carbamoyl phosphate synthase large chain (Clostridium botulinum (strain Langeland / NCTC 10281 / Type F)).